Consider the following 207-residue polypeptide: Protein dct-5 (207 aa).

A helical membrane pass occupies residues 13–33 (LNFILSIMNSYLFVLIVSIGF).

It is found in the membrane. Acts downstream of daf-16/foxo to suppress tumors induced by disruption of gld-1. Potentially a direct target of daf-15/foxo. In Caenorhabditis elegans, this protein is Protein dct-5 (dct-5).